The chain runs to 141 residues: Drosulfakinins (141 aa).

The signal sequence occupies residues 1-33; sequence MGLRSCTHLATLFMTLWALAFCFLVVVPIPAQT. A propeptide spanning residues 34-73 is cleaved from the precursor; it reads TSLQNAKDDRRLQELESKIGAESDQPNANLVGPSFSRFGD. Residues 51–72 are disordered; it reads KIGAESDQPNANLVGPSFSRFG. Phe82 is subject to Phenylalanine amide. The propeptide occupies 86-111; it reads VPLISRPMIPIELDLLMDNDDERTKA. Tyr117 is modified (sulfotyrosine). At Phe122 the chain carries Phenylalanine amide. The residue at position 134 (Tyr134) is a Sulfotyrosine. The residue at position 139 (Phe139) is a Phenylalanine amide.

Belongs to the gastrin/cholecystokinin family.

It localises to the secreted. Functionally, drosulfakinin-0 (DSK 0) plays diverse biological roles including regulating gut muscle contraction in adults but not in larvae. The protein is Drosulfakinins of Drosophila mauritiana (Fruit fly).